A 962-amino-acid chain; its full sequence is AP2-associated protein kinase 1 (962 aa).

At M1 the chain carries N-acetylmethionine. A compositionally biased stretch (basic and acidic residues) spans 1 to 11; the sequence is MKKFFDSRREQ. Positions 1–27 are disordered; the sequence is MKKFFDSRREQGSSGLGSGSSGGGGSS. The residue at position 14 (S14) is a Phosphoserine. Residues 14–27 are compositionally biased toward gly residues; sequence SGLGSGSSGGGGSS. Residues 46 to 314 enclose the Protein kinase domain; it reads VTVDEVLAEG…QVSYFSFKLL (269 aa). ATP contacts are provided by residues 52 to 60 and K74; that span reads LAEGGFALV. D176 (proton acceptor) is an active-site residue. Position 234 is a phosphotyrosine (Y234). Position 235 is a phosphoserine (S235). Disordered stretches follow at residues 325-515 and 576-633; these read NSPI…QFQA and PQAQ…RAGH. 2 positions are modified to phosphothreonine: T353 and T388. Residue R390 is modified to Omega-N-methylarginine. Positions 397 to 418 are enriched in polar residues; the sequence is PLPQATGPSNQPSLLASVSQPK. The segment covering 419–434 has biased composition (low complexity); sequence AQATPSQPLQSSQPKQ. Residues 435–444 show a composition bias toward pro residues; sequence PQAPPTPQQT. T440 is modified (phosphothreonine). Low complexity-rich tracts occupy residues 445–485, 498–514, and 576–606; these read PAPQ…QPQQ, QQQQPQQQQAQTQQQFQ, and PQAQPATAPQAAAAQEPQIQAPARQQPKVQT. A Phosphothreonine modification is found at T607. Residues 614 to 628 are compositionally biased toward polar residues; the sequence is GQKVGSLTPPSSPKT. Position 619 is a phosphoserine (S619). Phosphothreonine is present on T621. Phosphoserine occurs at positions 624, 625, 638, and 651. The residue at position 654 (T654) is a Phosphothreonine. The span at 664 to 677 shows a compositional bias: low complexity; the sequence is ASLSKSKSATTTPS. Positions 664-702 are disordered; the sequence is ASLSKSKSATTTPSGSPRTSQQNVSNASEGSTWNPFDDD. Residues 678–697 show a composition bias toward polar residues; it reads GSPRTSQQNVSNASEGSTWN. Phosphoserine is present on residues S732, S847, S938, and S939. Residues 824–961 form a clathrin-binding domain (CBD) region; it reads EKADAAVESL…SLLLVDQLID (138 aa). 2 disordered regions span residues 839 to 860 and 925 to 946; these read PPVAQRLPSHTESVTSNRTDSL and LITKNTQGGHSRNSSGSSESSL. Residues 846 to 860 show a composition bias toward polar residues; that stretch reads PSHTESVTSNRTDSL. Residues 932-945 are compositionally biased toward low complexity; it reads GGHSRNSSGSSESS.

It belongs to the protein kinase superfamily. Ser/Thr protein kinase family. As to quaternary structure, interacts (via CBD domain) with clathrin. Interacts with AP-2 complex. Interacts with NUMB. Interacts with alpha-adaptin. Interacts with EPS15. Interacts with membrane-bound activated NOTCH1 but not with the inactive full-length form of NOTCH1. Preferentially interacts with monoubiquitinated activated NOTCH1 compared to the non-ubiquitinated form. Post-translationally, autophosphorylated.

The protein localises to the cell membrane. It is found in the membrane. Its subcellular location is the clathrin-coated pit. The protein resides in the presynapse. The catalysed reaction is L-seryl-[protein] + ATP = O-phospho-L-seryl-[protein] + ADP + H(+). It carries out the reaction L-threonyl-[protein] + ATP = O-phospho-L-threonyl-[protein] + ADP + H(+). Stimulated by clathrin. In terms of biological role, regulates clathrin-mediated endocytosis by phosphorylating the AP2M1/mu2 subunit of the adaptor protein complex 2 (AP-2) which ensures high affinity binding of AP-2 to cargo membrane proteins during the initial stages of endocytosis. Preferentially, may phosphorylate substrates on threonine residues. Regulates phosphorylation of other AP-2 subunits as well as AP-2 localization and AP-2-mediated internalization of ligand complexes. Phosphorylates NUMB and regulates its cellular localization, promoting NUMB localization to endosomes. Binds to and stabilizes the activated form of NOTCH1, increases its localization in endosomes and regulates its transcriptional activity. The polypeptide is AP2-associated protein kinase 1 (Aak1) (Rattus norvegicus (Rat)).